The following is a 1413-amino-acid chain: DNA-directed RNA polymerase subunit beta' (1413 aa).

Residues cysteine 70, cysteine 72, cysteine 85, and cysteine 88 each coordinate Zn(2+). The Mg(2+) site is built by aspartate 460, aspartate 462, and aspartate 464. Zn(2+) is bound by residues cysteine 819, cysteine 893, cysteine 900, and cysteine 903.

Belongs to the RNA polymerase beta' chain family. As to quaternary structure, the RNAP catalytic core consists of 2 alpha, 1 beta, 1 beta' and 1 omega subunit. When a sigma factor is associated with the core the holoenzyme is formed, which can initiate transcription. It depends on Mg(2+) as a cofactor. Requires Zn(2+) as cofactor.

It catalyses the reaction RNA(n) + a ribonucleoside 5'-triphosphate = RNA(n+1) + diphosphate. DNA-dependent RNA polymerase catalyzes the transcription of DNA into RNA using the four ribonucleoside triphosphates as substrates. The polypeptide is DNA-directed RNA polymerase subunit beta' (Burkholderia ambifaria (strain MC40-6)).